A 473-amino-acid chain; its full sequence is Histone-lysine N-methyltransferase SET5 (473 aa).

The region spanning 107-381 is the SET domain; that stretch reads ANVHIIMTSK…SGEELTTTYV (275 aa).

The protein belongs to the class V-like SAM-binding methyltransferase superfamily. Histone-lysine methyltransferase family. SET5 subfamily.

It is found in the nucleus. The protein resides in the chromosome. Its subcellular location is the cytoplasm. It catalyses the reaction L-lysyl-[histone] + S-adenosyl-L-methionine = N(6)-methyl-L-lysyl-[histone] + S-adenosyl-L-homocysteine + H(+). Histone methyltransferase that monomethylates 'Lys-5', 'Lys-8' and 'Lys-12' of histone H4 (H4K5me1, H4K8me1 and H4K12me1, respectively), thereby controlling gene expression and remodeling chromatin structures. In Candida albicans (strain SC5314 / ATCC MYA-2876) (Yeast), this protein is Histone-lysine N-methyltransferase SET5 (SET5).